The chain runs to 330 residues: Aspartate--ammonia ligase (330 aa).

It belongs to the class-II aminoacyl-tRNA synthetase family. AsnA subfamily.

The protein localises to the cytoplasm. It catalyses the reaction L-aspartate + NH4(+) + ATP = L-asparagine + AMP + diphosphate + H(+). It functions in the pathway amino-acid biosynthesis; L-asparagine biosynthesis; L-asparagine from L-aspartate (ammonia route): step 1/1. In Cronobacter sakazakii (strain ATCC BAA-894) (Enterobacter sakazakii), this protein is Aspartate--ammonia ligase.